The chain runs to 97 residues: uncharacterized protein (97 aa).

The segment covering M1–D24 has biased composition (basic and acidic residues). Residues M1 to D97 are disordered. Low complexity predominate over residues S31–Q43. Basic and acidic residues predominate over residues T44–T53.

This is an uncharacterized protein from Bacillus subtilis (strain 168).